A 204-amino-acid chain; its full sequence is Tic20 family protein Ycf60 (204 aa).

4 helical membrane-spanning segments follow: residues leucine 5–isoleucine 25, leucine 87–isoleucine 107, isoleucine 133–phenylalanine 153, and glycine 159–isoleucine 179.

It belongs to the Tic20 family.

It is found in the plastid. Its subcellular location is the chloroplast membrane. The polypeptide is Tic20 family protein Ycf60 (ycf60) (Gracilaria tenuistipitata var. liui (Red alga)).